The sequence spans 270 residues: ATP synthase subunit b 1 (270 aa).

The chain crosses the membrane as a helical span at residues 2-22 (LIDWFTVIAQLINFLVLVWLL).

It belongs to the ATPase B chain family. F-type ATPases have 2 components, F(1) - the catalytic core - and F(0) - the membrane proton channel. F(1) has five subunits: alpha(3), beta(3), gamma(1), delta(1), epsilon(1). F(0) has three main subunits: a(1), b(2) and c(10-14). The alpha and beta chains form an alternating ring which encloses part of the gamma chain. F(1) is attached to F(0) by a central stalk formed by the gamma and epsilon chains, while a peripheral stalk is formed by the delta and b chains.

It localises to the cell inner membrane. Functionally, f(1)F(0) ATP synthase produces ATP from ADP in the presence of a proton or sodium gradient. F-type ATPases consist of two structural domains, F(1) containing the extramembraneous catalytic core and F(0) containing the membrane proton channel, linked together by a central stalk and a peripheral stalk. During catalysis, ATP synthesis in the catalytic domain of F(1) is coupled via a rotary mechanism of the central stalk subunits to proton translocation. Its function is as follows. Component of the F(0) channel, it forms part of the peripheral stalk, linking F(1) to F(0). In Marinomonas sp. (strain MWYL1), this protein is ATP synthase subunit b 1.